The chain runs to 232 residues: Anti-sigma-K factor RskA (232 aa).

Residues 1–91 (MTEPTDFQLL…QSRRQPRWRT (91 aa)) are Cytoplasmic-facing. A helical membrane pass occupies residues 92-112 (AVFASAAAIAVGLGAFGLGVL). Residues 113–232 (TRPSASPTVA…GTVLAELPLR (120 aa)) are Extracellular-facing.

Belongs to the anti-sigma-K factor family.

Its subcellular location is the cell membrane. In terms of biological role, an anti-sigma factor for extracytoplasmic function (ECF) sigma factor SigK. ECF sigma factors are held in an inactive form by an anti-sigma factor until released by regulated intramembrane proteolysis (RIP). RIP occurs when an extracytoplasmic signal triggers a concerted proteolytic cascade to transmit information and elicit cellular responses. The membrane-spanning regulatory substrate protein is first cut extracytoplasmically (site-1 protease, S1P), then within the membrane itself (site-2 protease, S2P, Rip1), while cytoplasmic proteases finish degrading the regulatory protein, liberating the sigma factor. The sequence is that of Anti-sigma-K factor RskA (rskA) from Mycobacterium ulcerans (strain Agy99).